Here is a 279-residue protein sequence, read N- to C-terminus: Oxygen-dependent coproporphyrinogen-III oxidase (279 aa).

Serine 102 contributes to the substrate binding site. The a divalent metal cation site is built by histidine 106 and histidine 116. Histidine 116 (proton donor) is an active-site residue. 118-120 serves as a coordination point for substrate; it reads NTR. Positions 149 and 179 each coordinate a divalent metal cation. Positions 244 to 279 are important for dimerization; that stretch reads YVEFNLLYDRGTKFGLMTDGNVEAILMSLPPVVKFN.

Belongs to the aerobic coproporphyrinogen-III oxidase family. Homodimer. It depends on a divalent metal cation as a cofactor.

It is found in the cytoplasm. The enzyme catalyses coproporphyrinogen III + O2 + 2 H(+) = protoporphyrinogen IX + 2 CO2 + 2 H2O. It participates in porphyrin-containing compound metabolism; protoporphyrin-IX biosynthesis; protoporphyrinogen-IX from coproporphyrinogen-III (O2 route): step 1/1. Its function is as follows. Involved in the heme biosynthesis. Catalyzes the aerobic oxidative decarboxylation of propionate groups of rings A and B of coproporphyrinogen-III to yield the vinyl groups in protoporphyrinogen-IX. The chain is Oxygen-dependent coproporphyrinogen-III oxidase from Rickettsia prowazekii (strain Madrid E).